The primary structure comprises 552 residues: CTP synthase (552 aa).

The interval 1-270 (MTKFVFVTGG…DGLICDKLRL (270 aa)) is amidoligase domain. S13 is a binding site for CTP. S13 provides a ligand contact to UTP. Residues 14–19 (SLGKGI) and D71 each bind ATP. D71 and E144 together coordinate Mg(2+). CTP-binding positions include 151–153 (DIE), 191–196 (KTKPTQ), and K227. UTP contacts are provided by residues 191 to 196 (KTKPTQ) and K227. Positions 295-548 (KIAMVGKYVE…VKAAIERQKA (254 aa)) constitute a Glutamine amidotransferase type-1 domain. Position 357 (G357) interacts with L-glutamine. C384 (nucleophile; for glutamine hydrolysis) is an active-site residue. L-glutamine contacts are provided by residues 385-388 (LGMQ), E408, and R474. Residues H521 and E523 contribute to the active site.

This sequence belongs to the CTP synthase family. In terms of assembly, homotetramer.

It catalyses the reaction UTP + L-glutamine + ATP + H2O = CTP + L-glutamate + ADP + phosphate + 2 H(+). It carries out the reaction L-glutamine + H2O = L-glutamate + NH4(+). The catalysed reaction is UTP + NH4(+) + ATP = CTP + ADP + phosphate + 2 H(+). It functions in the pathway pyrimidine metabolism; CTP biosynthesis via de novo pathway; CTP from UDP: step 2/2. Its activity is regulated as follows. Allosterically activated by GTP, when glutamine is the substrate; GTP has no effect on the reaction when ammonia is the substrate. The allosteric effector GTP functions by stabilizing the protein conformation that binds the tetrahedral intermediate(s) formed during glutamine hydrolysis. Inhibited by the product CTP, via allosteric rather than competitive inhibition. Catalyzes the ATP-dependent amination of UTP to CTP with either L-glutamine or ammonia as the source of nitrogen. Regulates intracellular CTP levels through interactions with the four ribonucleotide triphosphates. The sequence is that of CTP synthase from Delftia acidovorans (strain DSM 14801 / SPH-1).